The sequence spans 131 residues: Large ribosomal subunit protein bL17 (131 aa).

This sequence belongs to the bacterial ribosomal protein bL17 family. In terms of assembly, part of the 50S ribosomal subunit. Contacts protein L32.

In Shewanella violacea (strain JCM 10179 / CIP 106290 / LMG 19151 / DSS12), this protein is Large ribosomal subunit protein bL17.